The chain runs to 140 residues: MDQYLTVNVVTPDGLVYDHHAAIVVARTTAGEIGILPKHAPIIVPLTIDEVRVKRTDSDTHVDWIAVNGGIMEVRDNVVSIVADSAERERDIDVSRAERAKQRAERQIAEAKEKEDTNELKRATVALHRAINRIKVSKHS.

This sequence belongs to the ATPase epsilon chain family. F-type ATPases have 2 components, CF(1) - the catalytic core - and CF(0) - the membrane proton channel. CF(1) has five subunits: alpha(3), beta(3), gamma(1), delta(1), epsilon(1). CF(0) has three main subunits: a, b and c.

It localises to the cell membrane. Functionally, produces ATP from ADP in the presence of a proton gradient across the membrane. This chain is ATP synthase epsilon chain (atpC), found in Enterococcus hirae (strain ATCC 9790 / DSM 20160 / JCM 8729 / LMG 6399 / NBRC 3181 / NCIMB 6459 / NCDO 1258 / NCTC 12367 / WDCM 00089 / R).